Reading from the N-terminus, the 424-residue chain is Pachytene checkpoint protein 2 homolog (424 aa).

Residue 171–178 coordinates ATP; it reads GPPGTGKT.

The protein belongs to the AAA ATPase family. PCH2 subfamily.

Plays a key role in chromosome recombination and chromosome structure development during meiosis. Required at early steps in meiotic recombination that leads to non-crossovers pathways. Also needed for efficient completion of homologous synapsis by influencing crossover distribution along the chromosomes affecting both crossovers and non-crossovers pathways. This Danio rerio (Zebrafish) protein is Pachytene checkpoint protein 2 homolog (trip13).